A 493-amino-acid chain; its full sequence is Dipeptidase 3 (493 aa).

Residues 1–35 (MQPAGLEGPRALGLRPLGHRLSLLGVLLLVPSLWV) form the signal peptide. Residues 41 to 60 (TPSPSSAPTTPEASNATTAP) are compositionally biased toward low complexity. The segment at 41-74 (TPSPSSAPTTPEASNATTAPGIPNDTATSGVTSD) is disordered. 2 disulfide bridges follow: Cys-143/Cys-222 and Cys-294/Cys-326. Residue Asn-331 is glycosylated (N-linked (GlcNAc...) asparagine). Ser-462 carries the GPI-anchor amidated serine lipid modification. The propeptide at 463-493 (KAPPHPLPGLMATLTSLALILWLCCSGHRAV) is removed in mature form.

The protein belongs to the metallo-dependent hydrolases superfamily. Peptidase M19 family. Homodimer; disulfide-linked. Interacts with TEX101; co-localized on the cell surface of spermatocytes, spermatids, and testicular spermatozoa, co-localized only in cytoplasmic droplets of caput and corpus epididymal sperm. Expressed in testis but not ovary.

It localises to the membrane. Its function is as follows. Lacks dipeptidase activity and is unable to hydrolyze cystinyl-bis-glycine. The absence of activity may be due to the inability of serine (instead of aspartate found in DPEP1/2) at position 356 to function as the acid/base catalyst and activate the nucleophilic water/hydroxide. Does not hydrolyze leukotriene D4 (LTD4) into leukotriene E4 (LTE4). Does not hydrolyze the beta-lactam antibiotic imipenem. The polypeptide is Dipeptidase 3 (Dpep3) (Mus musculus (Mouse)).